A 231-amino-acid polypeptide reads, in one-letter code: 7-cyano-7-deazaguanine synthase (231 aa).

Position 8–18 (8–18) interacts with ATP; the sequence is FSGGQDSTTCL. Residues Cys188, Cys197, Cys200, and Cys203 each coordinate Zn(2+).

Belongs to the QueC family. Zn(2+) is required as a cofactor.

It carries out the reaction 7-carboxy-7-deazaguanine + NH4(+) + ATP = 7-cyano-7-deazaguanine + ADP + phosphate + H2O + H(+). It functions in the pathway purine metabolism; 7-cyano-7-deazaguanine biosynthesis. Catalyzes the ATP-dependent conversion of 7-carboxy-7-deazaguanine (CDG) to 7-cyano-7-deazaguanine (preQ(0)). This is 7-cyano-7-deazaguanine synthase from Salmonella paratyphi B (strain ATCC BAA-1250 / SPB7).